Here is a 293-residue protein sequence, read N- to C-terminus: MGQKVHPYSLRVKINKDWKSKWYFDKKLYSAILHEDFLIRREIMKFLKGIKFDISDIEIIRNNPQKVTVVIVTPRPGSVIGLKGSNLEKIGQLLTKKISKKISIKIKEVKRPELDAQIIANGIAKQVENRASYRKVLKSSLSTSMLKGAQGLKIKIAGRLGGAEIARSFEVKEGRVPLHTLRANIDYGFSEAQTTYGIIGVKVWLFKGEVLGRQTNSDAGQVINKKPFRERGDAVKNFDKTLNNREKANEKQTRLLDKKDGLSKDEVDLLNKKKFSASFSKERDDSNEQDIGG.

Residues 39 to 110 form the KH type-2 domain; that stretch reads IRREIMKFLK…KISIKIKEVK (72 aa).

The protein belongs to the universal ribosomal protein uS3 family. In terms of assembly, part of the 30S ribosomal subunit. Forms a tight complex with proteins S10 and S14.

Its function is as follows. Binds the lower part of the 30S subunit head. Binds mRNA in the 70S ribosome, positioning it for translation. This Borreliella burgdorferi (strain ATCC 35210 / DSM 4680 / CIP 102532 / B31) (Borrelia burgdorferi) protein is Small ribosomal subunit protein uS3.